We begin with the raw amino-acid sequence, 553 residues long: Heterochromatin protein 1-binding protein 3 (553 aa).

Ala2 bears the N-acetylalanine mark. Position 6 is a phosphoserine (Ser6). Disordered stretches follow at residues 29–134 (KLGE…KTIP) and 140–159 (SASQLARAQKQTPMASSPRP). Position 51 is a phosphothreonine (Thr51). Over residues 60–71 (GEEEKPEPDISS) the composition is skewed to acidic residues. Lys64 participates in a covalent cross-link: Glycyl lysine isopeptide (Lys-Gly) (interchain with G-Cter in SUMO2). At Thr85 the chain carries Phosphothreonine. A compositionally biased stretch (basic and acidic residues) spans 94 to 127 (EQPKGEPENEEKEENKSSEETKKDEKDQSKEKEK). Lys97 is covalently cross-linked (Glycyl lysine isopeptide (Lys-Gly) (interchain with G-Cter in SUMO2)). Positions 140 to 154 (SASQLARAQKQTPMA) are enriched in polar residues. 3 positions are modified to phosphoserine: Ser142, Ser155, and Ser156. The 76-residue stretch at 157-232 (PRPKMDAILT…GASGSFVVVQ (76 aa)) folds into the H15 1 domain. N6-acetyllysine is present on Lys190. The tract at residues 230–255 (VVQKSRKTPQKSRNRKNRSSAVDPEP) is disordered. The segment covering 233-247 (KSRKTPQKSRNRKNR) has biased composition (basic residues). 2 positions are modified to phosphoserine: Ser248 and Ser249. The PxVxL motif motif lies at 255-259 (PQVKL). H15 domains follow at residues 255-330 (PQVK…QLKK) and 337-413 (LGGS…QLCF). Lys258 participates in a covalent cross-link: Glycyl lysine isopeptide (Lys-Gly) (interchain with G-Cter in SUMO2). The disordered stretch occupies residues 422–553 (LFPKKEPDDS…TMKKSFRVKK (132 aa)). The segment covering 430–450 (DSRDEDEDEDESSEEDSEDEE) has biased composition (acidic residues). A phosphoserine mark is found at Ser441, Ser442, and Ser446. Basic residues predominate over residues 489 to 510 (GKARPLPKKAPPKAKTPAKKTR). The segment covering 517–527 (KKPSGGSSKKP) has biased composition (low complexity). Positions 543–553 (STMKKSFRVKK) are enriched in basic residues.

In terms of assembly, interacts (via PxVxL motif) with CBX5 (via Trp-174).

It localises to the nucleus. Its subcellular location is the chromosome. Component of heterochromatin that maintains heterochromatin integrity during G1/S progression and regulates the duration of G1 phase to critically influence cell proliferative capacity. Mediates chromatin condensation during hypoxia, leading to increased tumor cell viability, radio-resistance, chemo-resistance and self-renewal. This Homo sapiens (Human) protein is Heterochromatin protein 1-binding protein 3 (HP1BP3).